Reading from the N-terminus, the 261-residue chain is Thiazole synthase (261 aa).

Residue Lys102 is the Schiff-base intermediate with DXP of the active site. 1-deoxy-D-xylulose 5-phosphate is bound by residues Gly163, 189–190 (AG), and 211–212 (NT).

The protein belongs to the ThiG family. Homotetramer. Forms heterodimers with either ThiH or ThiS.

The protein resides in the cytoplasm. The enzyme catalyses [ThiS sulfur-carrier protein]-C-terminal-Gly-aminoethanethioate + 2-iminoacetate + 1-deoxy-D-xylulose 5-phosphate = [ThiS sulfur-carrier protein]-C-terminal Gly-Gly + 2-[(2R,5Z)-2-carboxy-4-methylthiazol-5(2H)-ylidene]ethyl phosphate + 2 H2O + H(+). The protein operates within cofactor biosynthesis; thiamine diphosphate biosynthesis. Its function is as follows. Catalyzes the rearrangement of 1-deoxy-D-xylulose 5-phosphate (DXP) to produce the thiazole phosphate moiety of thiamine. Sulfur is provided by the thiocarboxylate moiety of the carrier protein ThiS. In vitro, sulfur can be provided by H(2)S. The polypeptide is Thiazole synthase (Acinetobacter baumannii (strain SDF)).